Reading from the N-terminus, the 138-residue chain is Brain natriuretic peptide (138 aa).

A signal peptide spans 1–22 (MRLSSMWLCSLLLILKLQLSST). Disordered stretches follow at residues 50-84 (EQMA…AGLD) and 99-138 (SVRN…PKQR). Cysteine 111 and cysteine 127 form a disulfide bridge.

It belongs to the natriuretic peptide family.

The protein resides in the secreted. Cardiac hormone which may function as a paracrine antifibrotic factor in the heart. Also plays a key role in cardiovascular homeostasis through natriuresis, diuresis, vasorelaxation, and inhibition of renin and aldosterone secretion. The chain is Brain natriuretic peptide (nppb) from Oreochromis mossambicus (Mozambique tilapia).